Here is a 400-residue protein sequence, read N- to C-terminus: Argininosuccinate synthase (400 aa).

Residues 10–18 and A38 contribute to the ATP site; that span reads AYSGGVDTS. Y89 contributes to the L-citrulline binding site. Position 119 (G119) interacts with ATP. Positions 121, 125, and 126 each coordinate L-aspartate. N125 contributes to the L-citrulline binding site. R129, S177, S186, E262, and Y274 together coordinate L-citrulline.

Belongs to the argininosuccinate synthase family. Type 1 subfamily. As to quaternary structure, homotetramer.

The protein localises to the cytoplasm. It carries out the reaction L-citrulline + L-aspartate + ATP = 2-(N(omega)-L-arginino)succinate + AMP + diphosphate + H(+). It participates in amino-acid biosynthesis; L-arginine biosynthesis; L-arginine from L-ornithine and carbamoyl phosphate: step 2/3. The polypeptide is Argininosuccinate synthase (Trichormus variabilis (strain ATCC 29413 / PCC 7937) (Anabaena variabilis)).